The chain runs to 881 residues: DNA mismatch repair protein MutS (881 aa).

An ATP-binding site is contributed by 627–634 (GPNMGGKS).

The protein belongs to the DNA mismatch repair MutS family.

This protein is involved in the repair of mismatches in DNA. It is possible that it carries out the mismatch recognition step. This protein has a weak ATPase activity. The polypeptide is DNA mismatch repair protein MutS (Acinetobacter baumannii (strain AB307-0294)).